A 325-amino-acid polypeptide reads, in one-letter code: uncharacterized protein (325 aa).

Residues 1-32 are disordered; the sequence is MKQEYIPLDEFPNKSNEGMLNDEGTSSSGLST. A compositionally biased stretch (low complexity) spans 23-32; it reads EGTSSSGLST. The stretch at 135 to 223 forms a coiled coil; that stretch reads AEEISNLKTS…LKKREDLLRL (89 aa).

It localises to the cytoplasm. It is found in the cytoskeleton. The protein localises to the microtubule organizing center. Its subcellular location is the spindle pole body. This is an uncharacterized protein from Schizosaccharomyces pombe (strain 972 / ATCC 24843) (Fission yeast).